The primary structure comprises 196 residues: DnaA initiator-associating protein DiaA (196 aa).

Residues 34 to 196 enclose the SIS domain; it reads MVQSLLNGNK…DNTLFPHQDD (163 aa).

It belongs to the SIS family. DiaA subfamily. Homotetramer; dimer of dimers.

Its function is as follows. Required for the timely initiation of chromosomal replication via direct interactions with the DnaA initiator protein. This is DnaA initiator-associating protein DiaA from Photorhabdus laumondii subsp. laumondii (strain DSM 15139 / CIP 105565 / TT01) (Photorhabdus luminescens subsp. laumondii).